We begin with the raw amino-acid sequence, 508 residues long: Lysine--tRNA ligase (508 aa).

Mg(2+)-binding residues include glutamate 418 and glutamate 425.

Belongs to the class-II aminoacyl-tRNA synthetase family. In terms of assembly, homodimer. It depends on Mg(2+) as a cofactor.

The protein resides in the cytoplasm. The catalysed reaction is tRNA(Lys) + L-lysine + ATP = L-lysyl-tRNA(Lys) + AMP + diphosphate. This is Lysine--tRNA ligase from Burkholderia cenocepacia (strain HI2424).